A 244-amino-acid chain; its full sequence is Cysteine-rich secretory protein 1 (244 aa).

The N-terminal stretch at 1-19 is a signal peptide; the sequence is MALMLVLFFLAAVLPPSLL. The region spanning 44–170 is the SCP domain; the sequence is SKHNQLRRMV…PLRYYYVCHY (127 aa). The N-linked (GlcNAc...) asparagine glycan is linked to Asn-145. 5 disulfide bridges follow: Cys-190–Cys-197, Cys-193–Cys-202, Cys-206–Cys-239, Cys-215–Cys-233, and Cys-224–Cys-237. One can recognise a ShKT domain in the interval 206–239; the sequence is CGHEDKYTNCKYLKKMLSCEHELLKKGCKATCLC.

The protein belongs to the CRISP family. As to expression, mainly found in the cauda epididymis where it is synthesized by the principal cells and secreted into the lumen. Binds to the heads of spermatozoa. Also expressed in the submandibular gland.

The protein resides in the cytoplasmic vesicle. The protein localises to the secretory vesicle. In terms of biological role, this protein is supposed to help spermatozoa undergo functional maturation while they move from the testis to the ductus deferens. The sequence is that of Cysteine-rich secretory protein 1 (Crisp1) from Mus musculus (Mouse).